The following is a 250-amino-acid chain: Short-chain dehydrogenase RED3 (250 aa).

Residues Ile16, Ser35, Glu63, and Asn91 each coordinate NADP(+). Catalysis depends on proton donor residues Ser145 and Tyr164. Positions 164, 168, 195, and 197 each coordinate NADP(+). The active-site Lowers pKa of active site Tyr is the Lys168.

It belongs to the short-chain dehydrogenases/reductases (SDR) family.

The protein operates within polyketide biosynthesis. Short-chain dehydrogenase; part of the gene cluster that mediates the biosynthesis of pyriculol and pyriculariol, two heptaketides that induce lesion formation upon application on rice leaves but are dispensable for pathogenicity. The highly reducing polyketide synthase synthesizes the heptaketide backbone of pyriculol and pyriculariol. Pyriculol and pyriculariol contain several hydroxyl moieties and double bonds, so it can be assumed that several reduction steps occur during biosynthesis. These reactions could be executed by PKS19 itself or partly by the tailoring enzymes OXR1, OXR2, RED1, RED2 or RED3, identified within the cluster. The FAD-linked oxidoreductase OXR1 is the only tailoring enzyme for which the function has been determined yet, and is involved in the oxidation of dihydropyriculol and dihydropyriculariol into pyriculol and pyriculariol, respectively. In Pyricularia oryzae (strain 70-15 / ATCC MYA-4617 / FGSC 8958) (Rice blast fungus), this protein is Short-chain dehydrogenase RED3.